A 114-amino-acid polypeptide reads, in one-letter code: Hydrogenase maturation factor HypA (114 aa).

H2 provides a ligand contact to Ni(2+). The Zn(2+) site is built by C73, C76, C90, and C93.

The protein belongs to the HypA/HybF family.

In terms of biological role, involved in the maturation of [NiFe] hydrogenases. Required for nickel insertion into the metal center of the hydrogenase. This chain is Hydrogenase maturation factor HypA, found in Klebsiella pneumoniae subsp. pneumoniae (strain ATCC 700721 / MGH 78578).